The primary structure comprises 358 residues: Peptide chain release factor 1 (358 aa).

Glutamine 233 is subject to N5-methylglutamine.

Belongs to the prokaryotic/mitochondrial release factor family. Methylated by PrmC. Methylation increases the termination efficiency of RF1.

It is found in the cytoplasm. Peptide chain release factor 1 directs the termination of translation in response to the peptide chain termination codons UAG and UAA. This Clostridium botulinum (strain 657 / Type Ba4) protein is Peptide chain release factor 1.